The sequence spans 612 residues: Dihydroxy-acid dehydratase (612 aa).

Mg(2+) is bound at residue Asp81. Cys122 is a [2Fe-2S] cluster binding site. The Mg(2+) site is built by Asp123 and Lys124. Lys124 is subject to N6-carboxylysine. Cys193 is a [2Fe-2S] cluster binding site. Glu489 serves as a coordination point for Mg(2+). Ser515 serves as the catalytic Proton acceptor.

It belongs to the IlvD/Edd family. In terms of assembly, homodimer. It depends on [2Fe-2S] cluster as a cofactor. Mg(2+) is required as a cofactor.

The enzyme catalyses (2R)-2,3-dihydroxy-3-methylbutanoate = 3-methyl-2-oxobutanoate + H2O. The catalysed reaction is (2R,3R)-2,3-dihydroxy-3-methylpentanoate = (S)-3-methyl-2-oxopentanoate + H2O. The protein operates within amino-acid biosynthesis; L-isoleucine biosynthesis; L-isoleucine from 2-oxobutanoate: step 3/4. Its pathway is amino-acid biosynthesis; L-valine biosynthesis; L-valine from pyruvate: step 3/4. Functions in the biosynthesis of branched-chain amino acids. Catalyzes the dehydration of (2R,3R)-2,3-dihydroxy-3-methylpentanoate (2,3-dihydroxy-3-methylvalerate) into 2-oxo-3-methylpentanoate (2-oxo-3-methylvalerate) and of (2R)-2,3-dihydroxy-3-methylbutanoate (2,3-dihydroxyisovalerate) into 2-oxo-3-methylbutanoate (2-oxoisovalerate), the penultimate precursor to L-isoleucine and L-valine, respectively. This chain is Dihydroxy-acid dehydratase, found in Pseudomonas aeruginosa (strain LESB58).